Consider the following 161-residue polypeptide: Regulator of ribonuclease activity A (161 aa).

It belongs to the RraA family. In terms of assembly, homotrimer. Binds to both RNA-binding sites in the C-terminal region of Rne and to RhlB.

It is found in the cytoplasm. Functionally, globally modulates RNA abundance by binding to RNase E (Rne) and regulating its endonucleolytic activity. Can modulate Rne action in a substrate-dependent manner by altering the composition of the degradosome. Modulates RNA-binding and helicase activities of the degradosome. The protein is Regulator of ribonuclease activity A of Cronobacter sakazakii (strain ATCC BAA-894) (Enterobacter sakazakii).